The sequence spans 590 residues: Mitochondrial distribution and morphology protein 34 (590 aa).

Positions 1-225 constitute an SMP-LTD domain; it reads MSFIFNRETF…LPSVIFNMSQ (225 aa). A compositionally biased stretch (basic residues) spans 393–405; the sequence is RRKIKMRSRKPSK. Residues 393–456 form a disordered region; the sequence is RRKIKMRSRK…APEGGPNAED (64 aa). Residues 413-427 are compositionally biased toward polar residues; it reads PAQNDSGTSSCSNVA.

It belongs to the MDM34 family. In terms of assembly, component of the ER-mitochondria encounter structure (ERMES) or MDM complex, composed of MMM1, MDM10, MDM12 and MDM34.

It localises to the mitochondrion outer membrane. Its function is as follows. Component of the ERMES/MDM complex, which serves as a molecular tether to connect the endoplasmic reticulum (ER) and mitochondria. Components of this complex are involved in the control of mitochondrial shape and protein biogenesis, and function in nonvesicular lipid trafficking between the ER and mitochondria. MDM34 is required for the interaction of the ER-resident membrane protein MMM1 and the outer mitochondrial membrane-resident beta-barrel protein MDM10. This is Mitochondrial distribution and morphology protein 34 from Eremothecium gossypii (strain ATCC 10895 / CBS 109.51 / FGSC 9923 / NRRL Y-1056) (Yeast).